The primary structure comprises 86 residues: MEGRRFAAVLILTICMLAPGTGTLLPKDRPSLCDLPADSGSGTKAEKRIYYNSARKQCLRFDYTGQGGNENNFRRTYDCQRTCLYT.

The signal sequence occupies residues 1–26; that stretch reads MEGRRFAAVLILTICMLAPGTGTLLP. Positions 33-83 constitute a BPTI/Kunitz inhibitor domain; that stretch reads CDLPADSGSGTKAEKRIYYNSARKQCLRFDYTGQGGNENNFRRTYDCQRTC. 2 cysteine pairs are disulfide-bonded: cysteine 33–cysteine 83 and cysteine 58–cysteine 79. Position 86 is a threonine amide (threonine 86).

It belongs to the venom Kunitz-type family. Contains 2 disulfide bonds instead of 3, as for all Kunitz domain proteins. A double Cys-mutant carrying an additional Cys bridge does not show difference in activity with the natural peptide. However, there are some differences in the kinetics of binding of both peptides to the channel. Expressed by the venom duct.

It is found in the secreted. Blocks specifically voltage-activated potassium channels (Kv) of the Shaker family (IC(50)=1.33 nM). This Conus striatus (Striated cone) protein is Kunitz-type conkunitzin-S1.